Consider the following 45-residue polypeptide: Proteinase inhibitor IIA (45 aa).

3 disulfides stabilise this stretch: cysteine 10-cysteine 24, cysteine 14-cysteine 35, and cysteine 20-cysteine 43.

This sequence belongs to the protease inhibitor I20 (potato type II proteinase inhibitor) family.

It is found in the secreted. Functionally, inhibits trypsin strongly and chymotrypsin temporarily. This Solanum tuberosum (Potato) protein is Proteinase inhibitor IIA.